Consider the following 557-residue polypeptide: Arginine--tRNA ligase (557 aa).

The short motif at 132–142 (ANPTGLLHMGN) is the 'HIGH' region element.

It belongs to the class-I aminoacyl-tRNA synthetase family. Monomer.

Its subcellular location is the cytoplasm. The enzyme catalyses tRNA(Arg) + L-arginine + ATP = L-arginyl-tRNA(Arg) + AMP + diphosphate. The chain is Arginine--tRNA ligase from Carboxydothermus hydrogenoformans (strain ATCC BAA-161 / DSM 6008 / Z-2901).